The chain runs to 325 residues: Glutarate 2-hydroxylase (325 aa).

Histidine 160, aspartate 162, and histidine 292 together coordinate Fe cation.

Belongs to the glutarate hydroxylase family. Homotetramer. The cofactor is Fe(2+).

It carries out the reaction glutarate + 2-oxoglutarate + O2 = (S)-2-hydroxyglutarate + succinate + CO2. It functions in the pathway amino-acid degradation. Acts as an alpha-ketoglutarate-dependent dioxygenase catalyzing hydroxylation of glutarate (GA) to L-2-hydroxyglutarate (L2HG). Functions in a L-lysine degradation pathway that proceeds via cadaverine, glutarate and L-2-hydroxyglutarate. The protein is Glutarate 2-hydroxylase of Escherichia coli O6:H1 (strain CFT073 / ATCC 700928 / UPEC).